The primary structure comprises 78 residues: Large ribosomal subunit protein bL28 (78 aa).

It belongs to the bacterial ribosomal protein bL28 family.

The sequence is that of Large ribosomal subunit protein bL28 from Thiobacillus denitrificans (strain ATCC 25259 / T1).